Here is a 195-residue protein sequence, read N- to C-terminus: Holliday junction branch migration complex subunit RuvA (195 aa).

The domain I stretch occupies residues 1-63; sequence MIASVRGEVL…EDSQTLYGFA (63 aa). Positions 64-138 are domain II; the sequence is DSDARDLFLT…DKVGSSTSSG (75 aa). A flexible linker region spans residues 138 to 142; sequence GVAAA. Positions 143–195 are domain III; the sequence is GGHGIRGPVVEALVGLGFAVKQAEEATDKVLANDPEATTSSALRAALSMLGKK.

Belongs to the RuvA family. In terms of assembly, homotetramer. Forms an RuvA(8)-RuvB(12)-Holliday junction (HJ) complex. HJ DNA is sandwiched between 2 RuvA tetramers; dsDNA enters through RuvA and exits via RuvB. An RuvB hexamer assembles on each DNA strand where it exits the tetramer. Each RuvB hexamer is contacted by two RuvA subunits (via domain III) on 2 adjacent RuvB subunits; this complex drives branch migration. In the full resolvosome a probable DNA-RuvA(4)-RuvB(12)-RuvC(2) complex forms which resolves the HJ.

Its subcellular location is the cytoplasm. Functionally, the RuvA-RuvB-RuvC complex processes Holliday junction (HJ) DNA during genetic recombination and DNA repair, while the RuvA-RuvB complex plays an important role in the rescue of blocked DNA replication forks via replication fork reversal (RFR). RuvA specifically binds to HJ cruciform DNA, conferring on it an open structure. The RuvB hexamer acts as an ATP-dependent pump, pulling dsDNA into and through the RuvAB complex. HJ branch migration allows RuvC to scan DNA until it finds its consensus sequence, where it cleaves and resolves the cruciform DNA. This Mycolicibacterium gilvum (strain PYR-GCK) (Mycobacterium gilvum (strain PYR-GCK)) protein is Holliday junction branch migration complex subunit RuvA.